The chain runs to 354 residues: Ubiquitin-conjugating enzyme E2 Z (354 aa).

A disordered region spans residues 1-21 (MAESPTEEAATAGAGAAGPGA). The UBC core domain occupies 99-253 (QCLLRIKRDI…IRHETIRVAV (155 aa)). The active-site Glycyl thioester intermediate is the C188. The tract at residues 332–354 (NAEMDSDSSSSGTETDLHGSLRV) is disordered. The residue at position 337 (S337) is a Phosphoserine.

It belongs to the ubiquitin-conjugating enzyme family. As to expression, widely expressed. Highly in placenta, pancreas, spleen and testis.

It is found in the cytoplasm. It localises to the nucleus. It carries out the reaction S-ubiquitinyl-[E1 ubiquitin-activating enzyme]-L-cysteine + [E2 ubiquitin-conjugating enzyme]-L-cysteine = [E1 ubiquitin-activating enzyme]-L-cysteine + S-ubiquitinyl-[E2 ubiquitin-conjugating enzyme]-L-cysteine.. It functions in the pathway protein modification; protein ubiquitination. Its function is as follows. Catalyzes the covalent attachment of ubiquitin to other proteins. Specific substrate for UBA6, not charged with ubiquitin by UBE1. May be involved in apoptosis regulation. This chain is Ubiquitin-conjugating enzyme E2 Z (UBE2Z), found in Homo sapiens (Human).